We begin with the raw amino-acid sequence, 111 residues long: Large ribosomal subunit protein uL22 (111 aa).

Belongs to the universal ribosomal protein uL22 family. Part of the 50S ribosomal subunit.

This protein binds specifically to 23S rRNA; its binding is stimulated by other ribosomal proteins, e.g. L4, L17, and L20. It is important during the early stages of 50S assembly. It makes multiple contacts with different domains of the 23S rRNA in the assembled 50S subunit and ribosome. Its function is as follows. The globular domain of the protein is located near the polypeptide exit tunnel on the outside of the subunit, while an extended beta-hairpin is found that lines the wall of the exit tunnel in the center of the 70S ribosome. The chain is Large ribosomal subunit protein uL22 from Francisella philomiragia subsp. philomiragia (strain ATCC 25017 / CCUG 19701 / FSC 153 / O#319-036).